A 420-amino-acid polypeptide reads, in one-letter code: 3-phosphoshikimate 1-carboxyvinyltransferase (420 aa).

3-phosphoshikimate-binding residues include K26, S27, and R31. K26 lines the phosphoenolpyruvate pocket. Positions 97 and 125 each coordinate phosphoenolpyruvate. 6 residues coordinate 3-phosphoshikimate: S170, S171, Q172, D297, N320, and K324. Q172 is a phosphoenolpyruvate binding site. D297 (proton acceptor) is an active-site residue. The phosphoenolpyruvate site is built by R328, R375, and K400.

This sequence belongs to the EPSP synthase family. As to quaternary structure, monomer.

It is found in the cytoplasm. It catalyses the reaction 3-phosphoshikimate + phosphoenolpyruvate = 5-O-(1-carboxyvinyl)-3-phosphoshikimate + phosphate. The protein operates within metabolic intermediate biosynthesis; chorismate biosynthesis; chorismate from D-erythrose 4-phosphate and phosphoenolpyruvate: step 6/7. Catalyzes the transfer of the enolpyruvyl moiety of phosphoenolpyruvate (PEP) to the 5-hydroxyl of shikimate-3-phosphate (S3P) to produce enolpyruvyl shikimate-3-phosphate and inorganic phosphate. The polypeptide is 3-phosphoshikimate 1-carboxyvinyltransferase (Rhizobium leguminosarum bv. trifolii (strain WSM2304)).